A 359-amino-acid polypeptide reads, in one-letter code: Lactosylceramide 4-alpha-galactosyltransferase (359 aa).

Residues 1 to 30 (MGISCSHLEETMSKPPDCLLRMLRGTPRQR) are Cytoplasmic-facing. Residues 31-51 (VFTFFIISFKFMFLISILIYW) traverse the membrane as a helical; Signal-anchor for type II membrane protein segment. Residues 52–359 (HTVGAPKDQR…TTHRAMKMYL (308 aa)) lie on the Lumenal side of the membrane. The short motif at 198 to 200 (DTD) is the DXD motif element. 2 N-linked (GlcNAc...) asparagine glycosylation sites follow: Asn-209 and Asn-315.

Belongs to the glycosyltransferase 32 family.

The protein localises to the golgi apparatus membrane. It catalyses the reaction a beta-D-Gal-(1-&gt;4)-beta-D-Glc-(1&lt;-&gt;1)-Cer(d18:1(4E)) + UDP-alpha-D-galactose = a globoside Gb3Cer (d18:1(4E)) + UDP + H(+). It carries out the reaction a beta-D-Gal-(1&lt;-&gt;1')-ceramide + UDP-alpha-D-galactose = alpha-D-Gal-(1-&gt;4)-beta-D-Gal-(1&lt;-&gt;1')-Cer + UDP + H(+). It functions in the pathway glycolipid biosynthesis. Catalyzes the transfer of galactose from UDP-alpha-D-galactose to lactosylceramide/beta-D-galactosyl-(1-&gt;4)-beta-D-glucosyl-(1&lt;-&gt;1)-ceramide(d18:1(4E)) to produce globotriaosylceramide/globoside Gb3Cer (d18:1(4E)). Also able to transfer galactose to galactosylceramide/beta-D-Gal-(1&lt;-&gt;1')-Cer. Globoside Gb3Cer is a glycosphingolipid of the globo serie, one of the major types of neutral root structures of glycosphingolipids, that constitute a significant portion of mammalian cell membranes. The sequence is that of Lactosylceramide 4-alpha-galactosyltransferase from Mus musculus (Mouse).